The following is a 595-amino-acid chain: Putative lipase atg15 (595 aa).

Residues M1 to D20 are Cytoplasmic-facing. Residues L21–G41 traverse the membrane as a helical; Signal-anchor for type II membrane protein segment. The Lumenal segment spans residues S42–F595. N-linked (GlcNAc...) asparagine glycosylation is found at N164, N199, N221, N279, and N303. S319 acts as the Charge relay system in catalysis. N465 is a glycosylation site (N-linked (GlcNAc...) asparagine).

The protein belongs to the AB hydrolase superfamily. Lipase family. As to quaternary structure, binds to both phosphatidylinositol (PI) and phosphatidylinositol 3,5-bisphosphate (PIP2).

It is found in the endosome. The protein resides in the multivesicular body membrane. Its subcellular location is the prevacuolar compartment membrane. It catalyses the reaction a triacylglycerol + H2O = a diacylglycerol + a fatty acid + H(+). Lipase which is essential for lysis of subvacuolar cytoplasm to vacuole targeted bodies and intravacuolar autophagic bodies. Involved in the lysis of intravacuolar multivesicular body (MVB) vesicles. The intravacuolar membrane disintegration by atg15 is critical to life span extension. In Aspergillus niger (strain ATCC MYA-4892 / CBS 513.88 / FGSC A1513), this protein is Putative lipase atg15 (atg15).